The following is a 231-amino-acid chain: Large ribosomal subunit protein uL1 (231 aa).

It belongs to the universal ribosomal protein uL1 family. In terms of assembly, part of the 50S ribosomal subunit.

Binds directly to 23S rRNA. The L1 stalk is quite mobile in the ribosome, and is involved in E site tRNA release. Its function is as follows. Protein L1 is also a translational repressor protein, it controls the translation of the L11 operon by binding to its mRNA. This Lactobacillus delbrueckii subsp. bulgaricus (strain ATCC 11842 / DSM 20081 / BCRC 10696 / JCM 1002 / NBRC 13953 / NCIMB 11778 / NCTC 12712 / WDCM 00102 / Lb 14) protein is Large ribosomal subunit protein uL1.